Here is a 730-residue protein sequence, read N- to C-terminus: Dynein axonemal intermediate chain 7 (730 aa).

Basic residues predominate over residues 1–14; the sequence is MAPKSKKAPSKKKM. Residues 1-20 are disordered; that stretch reads MAPKSKKAPSKKKMTKAERL.

This sequence belongs to the DNAI7 family. Part of the multisubunit axonemal dynein complex formed at least of two heavy chains and a number of intermediate and light chains. Interacts with tubulin. Associates with microtubule. Post-translationally, ubiquitinated. Ubiquitination leads to its degradation through the 26S proteasome. Ubiquitin-proteasome-mediated DNAI7 degradation occurs in mitosis. High expressed in lung, kidney, and testis.

The protein localises to the cell projection. It is found in the cilium. It localises to the cytoplasm. Via its association with the multisubunit axonemal dynein complex, is potentially involved in the regulation of cilia function. May also act as a cell cycle regulator. The chain is Dynein axonemal intermediate chain 7 (Dnai7) from Mus musculus (Mouse).